The primary structure comprises 128 residues: S-adenosylmethionine decarboxylase proenzyme (128 aa).

Ser-63 functions as the Schiff-base intermediate with substrate; via pyruvic acid in the catalytic mechanism. Ser-63 is subject to Pyruvic acid (Ser); by autocatalysis. Catalysis depends on His-68, which acts as the Proton acceptor; for processing activity. The active-site Proton donor; for catalytic activity is the Cys-83.

It belongs to the prokaryotic AdoMetDC family. Type 1 subfamily. As to quaternary structure, heterotetramer of two alpha and two beta chains arranged as a dimer of alpha/beta heterodimers. Pyruvate serves as cofactor. In terms of processing, is synthesized initially as an inactive proenzyme. Formation of the active enzyme involves a self-maturation process in which the active site pyruvoyl group is generated from an internal serine residue via an autocatalytic post-translational modification. Two non-identical subunits are generated from the proenzyme in this reaction, and the pyruvate is formed at the N-terminus of the alpha chain, which is derived from the carboxyl end of the proenzyme. The post-translation cleavage follows an unusual pathway, termed non-hydrolytic serinolysis, in which the side chain hydroxyl group of the serine supplies its oxygen atom to form the C-terminus of the beta chain, while the remainder of the serine residue undergoes an oxidative deamination to produce ammonia and the pyruvoyl group blocking the N-terminus of the alpha chain.

It catalyses the reaction S-adenosyl-L-methionine + H(+) = S-adenosyl 3-(methylsulfanyl)propylamine + CO2. Its pathway is amine and polyamine biosynthesis; S-adenosylmethioninamine biosynthesis; S-adenosylmethioninamine from S-adenosyl-L-methionine: step 1/1. Functionally, catalyzes the decarboxylation of S-adenosylmethionine to S-adenosylmethioninamine (dcAdoMet), the propylamine donor required for the synthesis of the polyamines spermine and spermidine from the diamine putrescine. The polypeptide is S-adenosylmethionine decarboxylase proenzyme (Leptospira borgpetersenii serovar Hardjo-bovis (strain JB197)).